A 433-amino-acid chain; its full sequence is Tol-Pal system protein TolB (433 aa).

A signal peptide spans 1-26 (MSLMTKLGFRALVASCLIAAGGAAHA).

The protein belongs to the TolB family. The Tol-Pal system is composed of five core proteins: the inner membrane proteins TolA, TolQ and TolR, the periplasmic protein TolB and the outer membrane protein Pal. They form a network linking the inner and outer membranes and the peptidoglycan layer.

The protein resides in the periplasm. In terms of biological role, part of the Tol-Pal system, which plays a role in outer membrane invagination during cell division and is important for maintaining outer membrane integrity. The chain is Tol-Pal system protein TolB from Burkholderia pseudomallei (strain 1710b).